A 571-amino-acid chain; its full sequence is Septation ring formation regulator EzrA (571 aa).

The Extracellular segment spans residues 1–3 (MYY). The chain crosses the membrane as a helical span at residues 4-22 (MLIGFIIVVIAIISAGYIL). The Cytoplasmic portion of the chain corresponds to 23 to 571 (KRKHYQRINE…ESKVSVDDIE (549 aa)). 5 coiled-coil regions span residues 169 to 214 (VETK…AQME), 249 to 298 (AQME…DTLE), 326 to 374 (DALA…ASGE), 400 to 438 (KFAE…RERL), and 474 to 529 (TQDW…ENHF).

The protein belongs to the EzrA family.

It localises to the cell membrane. Functionally, negative regulator of FtsZ ring formation; modulates the frequency and position of FtsZ ring formation. Inhibits FtsZ ring formation at polar sites. Interacts either with FtsZ or with one of its binding partners to promote depolymerization. This chain is Septation ring formation regulator EzrA, found in Listeria welshimeri serovar 6b (strain ATCC 35897 / DSM 20650 / CCUG 15529 / CIP 8149 / NCTC 11857 / SLCC 5334 / V8).